Consider the following 350-residue polypeptide: Uroporphyrinogen decarboxylase (350 aa).

Residues 28–32, Asp78, Tyr155, Ser210, and His325 each bind substrate; that span reads RQAGR.

This sequence belongs to the uroporphyrinogen decarboxylase family. In terms of assembly, homodimer.

The protein localises to the cytoplasm. It catalyses the reaction uroporphyrinogen III + 4 H(+) = coproporphyrinogen III + 4 CO2. It participates in porphyrin-containing compound metabolism; protoporphyrin-IX biosynthesis; coproporphyrinogen-III from 5-aminolevulinate: step 4/4. Its function is as follows. Catalyzes the decarboxylation of four acetate groups of uroporphyrinogen-III to yield coproporphyrinogen-III. The polypeptide is Uroporphyrinogen decarboxylase (Trichormus variabilis (strain ATCC 29413 / PCC 7937) (Anabaena variabilis)).